The following is a 447-amino-acid chain: Ribosomal protein uS12 methylthiotransferase RimO (447 aa).

One can recognise an MTTase N-terminal domain in the interval 4–114 (PKVGFVSLGC…VMEAVHEYVP (111 aa)). Residues cysteine 13, cysteine 49, cysteine 78, cysteine 147, cysteine 151, and cysteine 154 each coordinate [4Fe-4S] cluster. A Radical SAM core domain is found at 133–370 (LTPKHYAYLK…MQVQQEISAA (238 aa)). Residues 373 to 443 (QKRIGQTMTV…EYDLFAKLIQ (71 aa)) form the TRAM domain.

The protein belongs to the methylthiotransferase family. RimO subfamily. [4Fe-4S] cluster is required as a cofactor.

The protein resides in the cytoplasm. It catalyses the reaction L-aspartate(89)-[ribosomal protein uS12]-hydrogen + (sulfur carrier)-SH + AH2 + 2 S-adenosyl-L-methionine = 3-methylsulfanyl-L-aspartate(89)-[ribosomal protein uS12]-hydrogen + (sulfur carrier)-H + 5'-deoxyadenosine + L-methionine + A + S-adenosyl-L-homocysteine + 2 H(+). Functionally, catalyzes the methylthiolation of an aspartic acid residue of ribosomal protein uS12. This is Ribosomal protein uS12 methylthiotransferase RimO from Acinetobacter baylyi (strain ATCC 33305 / BD413 / ADP1).